Consider the following 197-residue polypeptide: 3-isopropylmalate dehydratase small subunit (197 aa).

This sequence belongs to the LeuD family. LeuD type 1 subfamily. Heterodimer of LeuC and LeuD.

It carries out the reaction (2R,3S)-3-isopropylmalate = (2S)-2-isopropylmalate. The protein operates within amino-acid biosynthesis; L-leucine biosynthesis; L-leucine from 3-methyl-2-oxobutanoate: step 2/4. In terms of biological role, catalyzes the isomerization between 2-isopropylmalate and 3-isopropylmalate, via the formation of 2-isopropylmaleate. This is 3-isopropylmalate dehydratase small subunit from Mycolicibacterium vanbaalenii (strain DSM 7251 / JCM 13017 / BCRC 16820 / KCTC 9966 / NRRL B-24157 / PYR-1) (Mycobacterium vanbaalenii).